The primary structure comprises 112 residues: DNA-binding protein Mboo_1886 (112 aa).

The protein belongs to the PDCD5 family.

This is DNA-binding protein Mboo_1886 from Methanoregula boonei (strain DSM 21154 / JCM 14090 / 6A8).